The sequence spans 200 residues: NADH-quinone oxidoreductase subunit B (200 aa).

Residues cysteine 78, cysteine 79, cysteine 144, and cysteine 174 each contribute to the [4Fe-4S] cluster site.

It belongs to the complex I 20 kDa subunit family. NDH-1 is composed of 14 different subunits. Subunits NuoB, C, D, E, F, and G constitute the peripheral sector of the complex. It depends on [4Fe-4S] cluster as a cofactor.

Its subcellular location is the cell membrane. The enzyme catalyses a quinone + NADH + 5 H(+)(in) = a quinol + NAD(+) + 4 H(+)(out). In terms of biological role, NDH-1 shuttles electrons from NADH, via FMN and iron-sulfur (Fe-S) centers, to quinones in the respiratory chain. The immediate electron acceptor for the enzyme in this species is believed to be ubiquinone. Couples the redox reaction to proton translocation (for every two electrons transferred, four hydrogen ions are translocated across the cytoplasmic membrane), and thus conserves the redox energy in a proton gradient. This Dehalococcoides mccartyi (strain ATCC BAA-2266 / KCTC 15142 / 195) (Dehalococcoides ethenogenes (strain 195)) protein is NADH-quinone oxidoreductase subunit B.